Consider the following 112-residue polypeptide: C-C motif chemokine 27 (112 aa).

A signal peptide spans 1-24 (MKGPPTFCSLLLLSLLLSPDPTAA). Cystine bridges form between Cys33/Cys62 and Cys34/Cys77.

This sequence belongs to the intercrine beta (chemokine CC) family. Monomer, dimer, and tetramer. Heparin avidly promotes oligomerization. Interacts with TNFAIP6 (via Link domain). Testis, thymus, placenta, ovary and skin.

It is found in the secreted. Chemotactic factor that attracts skin-associated memory T-lymphocytes. May play a role in mediating homing of lymphocytes to cutaneous sites. Binds to CCR10. The chain is C-C motif chemokine 27 (CCL27) from Homo sapiens (Human).